The sequence spans 553 residues: Dihydroxy-acid dehydratase (553 aa).

Aspartate 78 lines the Mg(2+) pocket. Cysteine 119 is a binding site for [2Fe-2S] cluster. Residues aspartate 120 and lysine 121 each contribute to the Mg(2+) site. Lysine 121 carries the N6-carboxylysine modification. Cysteine 193 contributes to the [2Fe-2S] cluster binding site. Glutamate 441 is a Mg(2+) binding site. Serine 467 acts as the Proton acceptor in catalysis.

The protein belongs to the IlvD/Edd family. In terms of assembly, homodimer. It depends on [2Fe-2S] cluster as a cofactor. Mg(2+) is required as a cofactor.

It carries out the reaction (2R)-2,3-dihydroxy-3-methylbutanoate = 3-methyl-2-oxobutanoate + H2O. The enzyme catalyses (2R,3R)-2,3-dihydroxy-3-methylpentanoate = (S)-3-methyl-2-oxopentanoate + H2O. It functions in the pathway amino-acid biosynthesis; L-isoleucine biosynthesis; L-isoleucine from 2-oxobutanoate: step 3/4. Its pathway is amino-acid biosynthesis; L-valine biosynthesis; L-valine from pyruvate: step 3/4. Functionally, functions in the biosynthesis of branched-chain amino acids. Catalyzes the dehydration of (2R,3R)-2,3-dihydroxy-3-methylpentanoate (2,3-dihydroxy-3-methylvalerate) into 2-oxo-3-methylpentanoate (2-oxo-3-methylvalerate) and of (2R)-2,3-dihydroxy-3-methylbutanoate (2,3-dihydroxyisovalerate) into 2-oxo-3-methylbutanoate (2-oxoisovalerate), the penultimate precursor to L-isoleucine and L-valine, respectively. The protein is Dihydroxy-acid dehydratase of Pelobacter propionicus (strain DSM 2379 / NBRC 103807 / OttBd1).